The following is a 113-amino-acid chain: Na(+)/H(+) antiporter subunit C (113 aa).

3 consecutive transmembrane segments (helical) span residues 4–21, 28–47, and 67–89; these read LMAVLAGIIFMAATYLLL, VIIGTALLSHGVHLMLLTMG, and PLPQALILTAIVISFGVTSFILV.

The protein belongs to the CPA3 antiporters (TC 2.A.63) subunit C family. Forms a heterooligomeric complex that consists of seven subunits: MrpA, MrpB, MrpC, MrpD, MrpE, MrpF and MrpG.

Its subcellular location is the cell membrane. Mrp complex is a Na(+)/H(+) antiporter that is considered to be the major Na(+) excretion system in B.subtilis. Has a major role in Na(+) resistance and a minor role in Na(+)- and K(+)-dependent pH homeostasis as compared to TetB. MrpA may be the actual Na(+)/H(+) antiporter, although the six other Mrp proteins are all required for Na(+)/H(+) antiport activity and Na(+) resistance. MrpA is required for initiation of sporulation when external Na(+) concentration increases. Also transports Li(+) but not K(+), Ca(2+) or Mg(2+). In Bacillus subtilis (strain 168), this protein is Na(+)/H(+) antiporter subunit C (mrpC).